We begin with the raw amino-acid sequence, 373 residues long: 3-isopropylmalate dehydrogenase (373 aa).

NAD(+) is bound at residue 82 to 93; the sequence is GPKWGTGALRPE. Substrate is bound by residues Arg100, Arg110, Arg139, and Asp231. Mg(2+) is bound by residues Asp231, Asp256, and Asp260. An NAD(+)-binding site is contributed by 295–306; sequence GSAPDLPANKVN.

Belongs to the isocitrate and isopropylmalate dehydrogenases family. Homodimer. Requires Mg(2+) as cofactor. Mn(2+) is required as a cofactor.

It localises to the cytoplasm. It catalyses the reaction (2R,3S)-3-isopropylmalate + NAD(+) = 4-methyl-2-oxopentanoate + CO2 + NADH. It functions in the pathway amino-acid biosynthesis; L-leucine biosynthesis; L-leucine from 3-methyl-2-oxobutanoate: step 3/4. Functionally, catalyzes the oxidation of 3-carboxy-2-hydroxy-4-methylpentanoate (3-isopropylmalate) to 3-carboxy-4-methyl-2-oxopentanoate. The product decarboxylates to 4-methyl-2 oxopentanoate. The chain is 3-isopropylmalate dehydrogenase (LEU2) from Candida maltosa (Yeast).